Consider the following 104-residue polypeptide: ATP synthase subunit c (104 aa).

The next 2 helical transmembrane spans lie at 31–51 (SVVAAGIGLGLAALGGAIGMG) and 75–95 (MFIALAMIEAQVIYALVVAMI).

The protein belongs to the ATPase C chain family. In terms of assembly, F-type ATPases have 2 components, F(1) - the catalytic core - and F(0) - the membrane proton channel. F(1) has five subunits: alpha(3), beta(3), gamma(1), delta(1), epsilon(1). F(0) has three main subunits: a(1), b(2) and c(10-14). The alpha and beta chains form an alternating ring which encloses part of the gamma chain. F(1) is attached to F(0) by a central stalk formed by the gamma and epsilon chains, while a peripheral stalk is formed by the delta and b chains.

It is found in the cell inner membrane. Its function is as follows. F(1)F(0) ATP synthase produces ATP from ADP in the presence of a proton or sodium gradient. F-type ATPases consist of two structural domains, F(1) containing the extramembraneous catalytic core and F(0) containing the membrane proton channel, linked together by a central stalk and a peripheral stalk. During catalysis, ATP synthesis in the catalytic domain of F(1) is coupled via a rotary mechanism of the central stalk subunits to proton translocation. In terms of biological role, key component of the F(0) channel; it plays a direct role in translocation across the membrane. A homomeric c-ring of between 10-14 subunits forms the central stalk rotor element with the F(1) delta and epsilon subunits. The polypeptide is ATP synthase subunit c (Aliarcobacter butzleri (strain RM4018) (Arcobacter butzleri)).